We begin with the raw amino-acid sequence, 742 residues long: Protein-lysine N-methyltransferase SMYD4 (742 aa).

Residue 110–112 coordinates S-adenosyl-L-methionine; it reads RSA. The SET domain maps to 230-569; that stretch reads SSLSLNFSTE…SGQEIFHCYG (340 aa). Zn(2+) contacts are provided by C295, C298, C308, C311, C317, C321, H330, and C334. An MYND-type zinc finger spans residues 295–334; that stretch reads CHHCLKQLLASIPCCGCSYAKYCSQNCADVAWEQYHRTEC. S-adenosyl-L-methionine-binding positions include N418, 534-535, and Y568; that span reads NH.

It belongs to the class V-like SAM-binding methyltransferase superfamily.

Its subcellular location is the nucleus. The protein resides in the cytoplasm. It carries out the reaction L-lysyl-[protein] + S-adenosyl-L-methionine = N(6)-methyl-L-lysyl-[protein] + S-adenosyl-L-homocysteine + H(+). Protein-lysine N-methyltransferase. Monomethylates PRMT5, modulating its transcriptional activity. May also act as a histone methyltransferase. Plays a critical role in cardiac development. Acts as a key epigenetic regulator of gene expression during cardiac development via its dual activities as a methyltransferase and negative regulator of HDAC1. This chain is Protein-lysine N-methyltransferase SMYD4 (SMYD4), found in Gallus gallus (Chicken).